The primary structure comprises 155 residues: Endoribonuclease YbeY (155 aa).

Positions 114, 118, and 124 each coordinate Zn(2+).

This sequence belongs to the endoribonuclease YbeY family. The cofactor is Zn(2+).

It is found in the cytoplasm. In terms of biological role, single strand-specific metallo-endoribonuclease involved in late-stage 70S ribosome quality control and in maturation of the 3' terminus of the 16S rRNA. This chain is Endoribonuclease YbeY, found in Enterobacter sp. (strain 638).